The sequence spans 269 residues: tRNA pseudouridine synthase A (269 aa).

Asp-51 serves as the catalytic Nucleophile. Position 109 (Tyr-109) interacts with substrate.

It belongs to the tRNA pseudouridine synthase TruA family. As to quaternary structure, homodimer.

It carries out the reaction uridine(38/39/40) in tRNA = pseudouridine(38/39/40) in tRNA. In terms of biological role, formation of pseudouridine at positions 38, 39 and 40 in the anticodon stem and loop of transfer RNAs. The polypeptide is tRNA pseudouridine synthase A (Histophilus somni (strain 2336) (Haemophilus somnus)).